A 61-amino-acid chain; its full sequence is Small ribosomal subunit protein uS14 (61 aa).

4 residues coordinate Zn(2+): cysteine 24, cysteine 27, cysteine 40, and cysteine 43.

Belongs to the universal ribosomal protein uS14 family. Zinc-binding uS14 subfamily. In terms of assembly, part of the 30S ribosomal subunit. Contacts proteins S3 and S10. Requires Zn(2+) as cofactor.

In terms of biological role, binds 16S rRNA, required for the assembly of 30S particles and may also be responsible for determining the conformation of the 16S rRNA at the A site. The sequence is that of Small ribosomal subunit protein uS14 from Staphylococcus aureus (strain USA300 / TCH1516).